Consider the following 324-residue polypeptide: HSF-like protein (324 aa).

An N-terminal signal peptide occupies residues 1–19; sequence MNSLVALVLLGQIIGSTVS. Cystatin fetuin-A-type domains are found at residues 21 to 130 and 141 to 254; these read QLGP…VKCS and RDCP…SDCV. Cystine bridges form between C28–C315, C85–C96, C110–C129, C143–C146, C205–C217, and C230–C253. An N-linked (GlcNAc...) asparagine glycan is attached at N95. N204 carries an N-linked (GlcNAc...) asparagine glycan. N-linked (GlcNAc...) asparagine glycosylation is present at N282.

This sequence belongs to the fetuin family. In terms of assembly, homodimer. In terms of tissue distribution, expressed by the liver.

Its subcellular location is the secreted. In terms of biological role, may not have antihemorrhagic activity. The polypeptide is HSF-like protein (Protobothrops flavoviridis (Habu)).